We begin with the raw amino-acid sequence, 250 residues long: ATP synthase subunit a (250 aa).

A run of 6 helical transmembrane segments spans residues 29-49, 84-104, 114-134, 143-163, 189-209, and 216-236; these read ASLF…FATS, FFPM…LGMM, IVVT…YGFY, LFVP…IEVI, VFAG…GGAL, and VALT…FAVL.

This sequence belongs to the ATPase A chain family. In terms of assembly, F-type ATPases have 2 components, CF(1) - the catalytic core - and CF(0) - the membrane proton channel. CF(1) has five subunits: alpha(3), beta(3), gamma(1), delta(1), epsilon(1). CF(0) has three main subunits: a(1), b(2) and c(9-12). The alpha and beta chains form an alternating ring which encloses part of the gamma chain. CF(1) is attached to CF(0) by a central stalk formed by the gamma and epsilon chains, while a peripheral stalk is formed by the delta and b chains.

It is found in the cell inner membrane. In terms of biological role, key component of the proton channel; it plays a direct role in the translocation of protons across the membrane. This Allorhizobium ampelinum (strain ATCC BAA-846 / DSM 112012 / S4) (Agrobacterium vitis (strain S4)) protein is ATP synthase subunit a.